Reading from the N-terminus, the 273-residue chain is Dermonecrotic toxin SdSicTox-betaIF1 (273 aa).

Histidine 5 is a catalytic residue. Glutamate 25 and aspartate 27 together coordinate Mg(2+). Histidine 41 serves as the catalytic Nucleophile. Disulfide bonds link cysteine 45–cysteine 51 and cysteine 47–cysteine 189.

The protein belongs to the arthropod phospholipase D family. Class II subfamily. The cofactor is Mg(2+). As to expression, expressed by the venom gland.

The protein localises to the secreted. The enzyme catalyses an N-(acyl)-sphingosylphosphocholine = an N-(acyl)-sphingosyl-1,3-cyclic phosphate + choline. The catalysed reaction is an N-(acyl)-sphingosylphosphoethanolamine = an N-(acyl)-sphingosyl-1,3-cyclic phosphate + ethanolamine. It catalyses the reaction a 1-acyl-sn-glycero-3-phosphocholine = a 1-acyl-sn-glycero-2,3-cyclic phosphate + choline. It carries out the reaction a 1-acyl-sn-glycero-3-phosphoethanolamine = a 1-acyl-sn-glycero-2,3-cyclic phosphate + ethanolamine. In terms of biological role, dermonecrotic toxins cleave the phosphodiester linkage between the phosphate and headgroup of certain phospholipids (sphingolipid and lysolipid substrates), forming an alcohol (often choline) and a cyclic phosphate. This toxin acts on sphingomyelin (SM). It may also act on ceramide phosphoethanolamine (CPE), lysophosphatidylcholine (LPC) and lysophosphatidylethanolamine (LPE), but not on lysophosphatidylserine (LPS), and lysophosphatidylglycerol (LPG). It acts by transphosphatidylation, releasing exclusively cyclic phosphate products as second products. Induces dermonecrosis, hemolysis, increased vascular permeability, edema, inflammatory response, and platelet aggregation. The polypeptide is Dermonecrotic toxin SdSicTox-betaIF1 (Sicarius cf. damarensis (strain GJB-2008) (Six-eyed sand spider)).